A 364-amino-acid chain; its full sequence is Isopentenyl-diphosphate delta-isomerase (364 aa).

Basic and acidic residues predominate over residues 1-13 (MSSAQRKDDHVRL). Positions 1–24 (MSSAQRKDDHVRLATEQQRAHSGR) are disordered. 6 to 7 (RK) contributes to the substrate binding site. Residues 64–66 (AMT), Ser-94, and Asn-123 each bind FMN. 94–96 (SMH) serves as a coordination point for substrate. Substrate is bound at residue Gln-153. Glu-154 contributes to the Mg(2+) binding site. Residues Lys-185, Ser-210, Thr-215, 259 to 261 (GIR), and 280 to 281 (SG) each bind FMN.

The protein belongs to the IPP isomerase type 2 family. In terms of assembly, homooctamer. Dimer of tetramers. Requires FMN as cofactor. It depends on NADPH as a cofactor. Mg(2+) serves as cofactor.

Its subcellular location is the cytoplasm. The catalysed reaction is isopentenyl diphosphate = dimethylallyl diphosphate. In terms of biological role, involved in the biosynthesis of isoprenoids. Catalyzes the 1,3-allylic rearrangement of the homoallylic substrate isopentenyl (IPP) to its allylic isomer, dimethylallyl diphosphate (DMAPP). This Kitasatospora griseola (Streptomyces griseolosporeus) protein is Isopentenyl-diphosphate delta-isomerase.